We begin with the raw amino-acid sequence, 273 residues long: Light-independent protochlorophyllide reductase iron-sulfur ATP-binding protein (273 aa).

ATP-binding positions include 12–17 (GIGKST) and Lys-41. Ser-16 is a Mg(2+) binding site. The [4Fe-4S] cluster site is built by Cys-97 and Cys-131. 182–183 (NR) lines the ATP pocket.

This sequence belongs to the NifH/BchL/ChlL family. In terms of assembly, homodimer. Protochlorophyllide reductase is composed of three subunits; BchL, BchN and BchB. The cofactor is [4Fe-4S] cluster.

It carries out the reaction chlorophyllide a + oxidized 2[4Fe-4S]-[ferredoxin] + 2 ADP + 2 phosphate = protochlorophyllide a + reduced 2[4Fe-4S]-[ferredoxin] + 2 ATP + 2 H2O. It participates in porphyrin-containing compound metabolism; bacteriochlorophyll biosynthesis (light-independent). Component of the dark-operative protochlorophyllide reductase (DPOR) that uses Mg-ATP and reduced ferredoxin to reduce ring D of protochlorophyllide (Pchlide) to form chlorophyllide a (Chlide). This reaction is light-independent. The L component serves as a unique electron donor to the NB-component of the complex, and binds Mg-ATP. This chain is Light-independent protochlorophyllide reductase iron-sulfur ATP-binding protein, found in Roseiflexus castenholzii (strain DSM 13941 / HLO8).